The chain runs to 509 residues: Heat shock 70 kDa protein 14 (509 aa).

The protein belongs to the heat shock protein 70 family. As to quaternary structure, component of ribosome-associated complex (RAC), a heterodimer composed of Hsp70/DnaK-type chaperone HSPA14 and Hsp40/DnaJ-type chaperone DNAJC2.

Its subcellular location is the cytoplasm. It is found in the cytosol. Component of the ribosome-associated complex (RAC), a complex involved in folding or maintaining nascent polypeptides in a folding-competent state. In the RAC complex, binds to the nascent polypeptide chain, while DNAJC2 stimulates its ATPase activity. The chain is Heat shock 70 kDa protein 14 (Hspa14) from Mus musculus (Mouse).